A 151-amino-acid polypeptide reads, in one-letter code: UPF0208 membrane protein CKO_00500 (151 aa).

The next 2 helical transmembrane spans lie at 46 to 65 and 69 to 91; these read YAIR…QIAL and LGPA…WWLG.

The protein belongs to the UPF0208 family.

It is found in the cell inner membrane. This is UPF0208 membrane protein CKO_00500 from Citrobacter koseri (strain ATCC BAA-895 / CDC 4225-83 / SGSC4696).